A 610-amino-acid chain; its full sequence is Membrane protein insertase YidC (610 aa).

The helical transmembrane segment at 7–27 threads the bilayer; that stretch reads FFITIALSILILALWQVFYLG. Positions 36 to 82 are disordered; the sequence is QARIEEQQRQAQQAAQNRQASSSTGDTPQMPANPDSIPGQGDTKAAG. Positions 44 to 55 are enriched in low complexity; the sequence is RQAQQAAQNRQA. Transmembrane regions (helical) follow at residues 358 to 378, 387 to 407, 458 to 478, 510 to 530, and 546 to 566; these read FDLLIDWGWFYFITKPMFYLI, NFGVAILVVTVLLKALFFPLA, WPVLVQIPVFFALYKVLYVTI, TVPHFLMIGVWPIIMGIIMFL, and IFTWMPIIFTFMLASFPAGLV.

This sequence belongs to the OXA1/ALB3/YidC family. Type 1 subfamily. As to quaternary structure, interacts with the Sec translocase complex via SecD. Specifically interacts with transmembrane segments of nascent integral membrane proteins during membrane integration.

It localises to the cell inner membrane. In terms of biological role, required for the insertion and/or proper folding and/or complex formation of integral membrane proteins into the membrane. Involved in integration of membrane proteins that insert both dependently and independently of the Sec translocase complex, as well as at least some lipoproteins. Aids folding of multispanning membrane proteins. The polypeptide is Membrane protein insertase YidC (Brucella melitensis biotype 1 (strain ATCC 23456 / CCUG 17765 / NCTC 10094 / 16M)).